A 96-amino-acid chain; its full sequence is Interleukin-8 (96 aa).

The signal sequence occupies residues Met-1–Ala-22. Residue Arg-27 is modified to Citrulline. Cystine bridges form between Cys-34-Cys-61 and Cys-36-Cys-78.

Belongs to the intercrine alpha (chemokine CxC) family. Homodimer. Interacts with TNFAIP6 (via Link domain); this interaction interferes with chemokine binding to glycosaminoglycans. Citrullination at Arg-27 prevents proteolysis, and dampens tissue inflammation, it also enhances leukocytosis, possibly through impaired chemokine clearance from the blood circulation.

The protein resides in the secreted. Its function is as follows. Chemotactic factor that mediates inflammatory response by attracting neutrophils, basophils, and T-cells to clear pathogens and protect the host from infection. Also plays an important role in neutrophil activation. Released in response to an inflammatory stimulus, exerts its effect by binding to the G-protein-coupled receptors CXCR1 and CXCR2, primarily found in neutrophils, monocytes and endothelial cells. G-protein heterotrimer (alpha, beta, gamma subunits) constitutively binds to CXCR1/CXCR2 receptor and activation by IL8 leads to beta and gamma subunits release from Galpha (GNAI2 in neutrophils) and activation of several downstream signaling pathways including PI3K and MAPK pathways. This chain is Interleukin-8 (CXCL8), found in Dasypus novemcinctus (Nine-banded armadillo).